We begin with the raw amino-acid sequence, 913 residues long: Striatin-interacting protein homolog (913 aa).

3 stretches are compositionally biased toward low complexity: residues 177–188, 195–204, and 791–811; these read QQQQQQQQNENE, TNFTTTTTTT, and NNNN…NNDN. 2 disordered regions span residues 177–204 and 791–814; these read QQQQ…TTTT and NNNN…NGLT.

The protein belongs to the STRIP family.

The polypeptide is Striatin-interacting protein homolog (fam40) (Dictyostelium discoideum (Social amoeba)).